Consider the following 420-residue polypeptide: Glutamate dehydrogenase (420 aa).

K105 is an active-site residue. Position 220–226 (220–226) interacts with NAD(+); it reads GYGNAGY.

This sequence belongs to the Glu/Leu/Phe/Val dehydrogenases family. Homohexamer.

The protein resides in the cytoplasm. It carries out the reaction L-glutamate + NAD(+) + H2O = 2-oxoglutarate + NH4(+) + NADH + H(+). The catalysed reaction is L-glutamate + NADP(+) + H2O = 2-oxoglutarate + NH4(+) + NADPH + H(+). The sequence is that of Glutamate dehydrogenase (gdhA) from Pyrococcus horikoshii (strain ATCC 700860 / DSM 12428 / JCM 9974 / NBRC 100139 / OT-3).